Here is a 461-residue protein sequence, read N- to C-terminus: Nicotianamine aminotransferase A (461 aa).

The interval 1 to 29 (MVHQSNGHGEAAAAAANGKSNGHAAAANG) is disordered. Over residues 11 to 29 (AAAAAANGKSNGHAAAANG) the composition is skewed to low complexity. Lysine 289 bears the N6-(pyridoxal phosphate)lysine mark.

The protein belongs to the class-I pyridoxal-phosphate-dependent aminotransferase family. The cofactor is pyridoxal 5'-phosphate. Expressed in roots, but not in leaves.

It carries out the reaction nicotianamine + 2-oxoglutarate = 3''-deamino-3''-oxonicotianamine + L-glutamate. In terms of biological role, involved in biosynthesis of mugineic acid family phytosiderophores. This chain is Nicotianamine aminotransferase A, found in Hordeum vulgare (Barley).